Here is a 408-residue protein sequence, read N- to C-terminus: Peptidase T (408 aa).

H78 contacts Zn(2+). The active site involves D80. A Zn(2+)-binding site is contributed by D140. The Proton acceptor role is filled by E173. Positions 174, 196, and 379 each coordinate Zn(2+).

It belongs to the peptidase M20B family. The cofactor is Zn(2+).

The protein localises to the cytoplasm. It carries out the reaction Release of the N-terminal residue from a tripeptide.. In terms of biological role, cleaves the N-terminal amino acid of tripeptides. This is Peptidase T from Escherichia fergusonii (strain ATCC 35469 / DSM 13698 / CCUG 18766 / IAM 14443 / JCM 21226 / LMG 7866 / NBRC 102419 / NCTC 12128 / CDC 0568-73).